An 870-amino-acid polypeptide reads, in one-letter code: Probable inorganic carbon transporter subunit DabA (870 aa).

Zn(2+) contacts are provided by Cys381, Asp383, His564, and Cys579.

It belongs to the inorganic carbon transporter (TC 9.A.2) DabA family. As to quaternary structure, forms a complex with DabB. Zn(2+) serves as cofactor.

Its subcellular location is the cell membrane. Functionally, part of an energy-coupled inorganic carbon pump. This is Probable inorganic carbon transporter subunit DabA from Geobacillus kaustophilus (strain HTA426).